The following is a 176-amino-acid chain: Urease accessory protein UreE (176 aa).

The interval 134 to 176 (EAGAYGSGGHHHHGESSQGHAHGPLAPIPVHQKIHRPSDIPSR) is disordered.

It belongs to the UreE family.

The protein resides in the cytoplasm. In terms of biological role, involved in urease metallocenter assembly. Binds nickel. Probably functions as a nickel donor during metallocenter assembly. This Nitrosospira multiformis (strain ATCC 25196 / NCIMB 11849 / C 71) protein is Urease accessory protein UreE.